A 517-amino-acid chain; its full sequence is Mucin-like protein 3 (517 aa).

Residues 1–29 (MAQPVHSLCSAFGLQCCLLFLLASWGAGA) form the signal peptide. Residues 30-448 (TTFQEYQKTG…GENDSFPAWA (419 aa)) lie on the Extracellular side of the membrane. The disordered stretch occupies residues 67–341 (SGQRPPELPK…PTENLGNTTL (275 aa)). Over residues 83–93 (QKRHCNTTRHS) the composition is skewed to basic residues. The N-linked (GlcNAc...) asparagine glycan is linked to asparagine 88. The span at 105-116 (TIDHKSSTDNHE) shows a compositional bias: basic and acidic residues. A glycan (N-linked (GlcNAc...) asparagine) is linked at asparagine 124. The span at 169 to 179 (RKSTTGKSTVT) shows a compositional bias: polar residues. Residues 180-190 (RKSDKTGRPLE) show a composition bias toward basic and acidic residues. A compositionally biased stretch (low complexity) spans 194 to 213 (STLDKTSTSSHKTTTSFHNS). Polar residues-rich tracts occupy residues 214–225 (GNSQTKQKSTSF), 232–243 (ASKTTYKTTGTP), and 263–283 (TKTT…QSLA). Residues 305-317 (TENRERTANENKK) are compositionally biased toward basic and acidic residues. A glycan (N-linked (GlcNAc...) asparagine) is linked at asparagine 338. A helical membrane pass occupies residues 449–469 (IVIVVLVAVILLLVFLGLIFL). Residues 470-517 (VSYMMRTRRTLTQNTQYNDAEDEGGPNSYPVYLMEQQNLGMGQIPSPR) are Cytoplasmic-facing.

As to expression, detected in lung, esophagus, stomach, rectum, skin, cervix, testis, kidney, uterus and small intestine. Expressed in pancreas (at protein level).

It localises to the cell membrane. Its subcellular location is the cytoplasm. In terms of biological role, may modulate NF-kappaB signaling and play a role in cell growth. The protein is Mucin-like protein 3 of Homo sapiens (Human).